The primary structure comprises 347 residues: uncharacterized protein (347 aa).

Over 1–44 the chain is Cytoplasmic; the sequence is MWNPKKKSEALAKFKSFPYPKPGTSNVLDSKEGDTRRKYFTKTH. Residues 45-62 traverse the membrane as a helical; Signal-anchor for type II membrane protein segment; sequence LHRLFVFVVLLLCSGYFL. Topologically, residues 63–347 are lumenal; it reads KHTLLTRPKE…RGWRKLVPFL (285 aa).

The protein belongs to the glycosyltransferase 34 family.

It is found in the endoplasmic reticulum membrane. This is an uncharacterized protein from Schizosaccharomyces pombe (strain 972 / ATCC 24843) (Fission yeast).